The sequence spans 398 residues: tRNA N6-adenosine threonylcarbamoyltransferase (398 aa).

The a divalent metal cation site is built by histidine 162, histidine 166, and tyrosine 183. Substrate is bound by residues 183–187 (YVSGG), aspartate 215, glycine 230, glutamate 234, and asparagine 329. Residue aspartate 357 coordinates a divalent metal cation.

It belongs to the KAE1 / TsaD family. Component of the EKC/KEOPS complex composed of at least BUD32, CGI121, GON7, KAE1 and PCC1; the whole complex dimerizes. It depends on a divalent metal cation as a cofactor.

It is found in the cytoplasm. Its subcellular location is the nucleus. The catalysed reaction is L-threonylcarbamoyladenylate + adenosine(37) in tRNA = N(6)-L-threonylcarbamoyladenosine(37) in tRNA + AMP + H(+). Functionally, component of the EKC/KEOPS complex that is required for the formation of a threonylcarbamoyl group on adenosine at position 37 (t(6)A37) in tRNAs that read codons beginning with adenine. The complex is probably involved in the transfer of the threonylcarbamoyl moiety of threonylcarbamoyl-AMP (TC-AMP) to the N6 group of A37. KAE1 likely plays a direct catalytic role in this reaction, but requires other protein(s) of the complex to fulfill this activity. The EKC/KEOPS complex also promotes both telomere uncapping and telomere elongation. The complex is required for efficient recruitment of transcriptional coactivators. The chain is tRNA N6-adenosine threonylcarbamoyltransferase from Cryptococcus neoformans var. neoformans serotype D (strain B-3501A) (Filobasidiella neoformans).